A 104-amino-acid polypeptide reads, in one-letter code: Cytochrome c6 (104 aa).

The first 20 residues, 1-20, serve as a signal peptide directing secretion; it reads MKSLLTFILTTIFCIQQVWA. Residues Cys34, Cys37, His38, and Met78 each coordinate heme c.

This sequence belongs to the cytochrome c family. PetJ subfamily. Monomer. In terms of processing, binds 1 heme c group covalently per subunit.

It is found in the plastid. It localises to the chloroplast thylakoid lumen. In terms of biological role, functions as an electron carrier between membrane-bound cytochrome b6-f and photosystem I in oxygenic photosynthesis. This Cyanidioschyzon merolae (strain NIES-3377 / 10D) (Unicellular red alga) protein is Cytochrome c6.